Reading from the N-terminus, the 121-residue chain is Phosphoribosyl-ATP pyrophosphatase (121 aa).

The protein belongs to the PRA-PH family.

It localises to the cytoplasm. It catalyses the reaction 1-(5-phospho-beta-D-ribosyl)-ATP + H2O = 1-(5-phospho-beta-D-ribosyl)-5'-AMP + diphosphate + H(+). The protein operates within amino-acid biosynthesis; L-histidine biosynthesis; L-histidine from 5-phospho-alpha-D-ribose 1-diphosphate: step 2/9. In Burkholderia multivorans (strain ATCC 17616 / 249), this protein is Phosphoribosyl-ATP pyrophosphatase.